Consider the following 647-residue polypeptide: Chaperone protein HtpG (647 aa).

An a; substrate-binding region spans residues 1–353 (MNAHVEQLEF…AQDMSLNVSR (353 aa)). Residues 354–567 (EILQQDRQIK…AFGMTPALAR (214 aa)) are b. Residues 568-647 (IYRASGQEVP…LLAERLARTL (80 aa)) form a c region.

The protein belongs to the heat shock protein 90 family. As to quaternary structure, homodimer.

It localises to the cytoplasm. In terms of biological role, molecular chaperone. Has ATPase activity. This is Chaperone protein HtpG from Mycobacterium bovis (strain ATCC BAA-935 / AF2122/97).